The sequence spans 503 residues: Plant-specific TFIIB-related protein 1 (503 aa).

The TFIIB-type zinc-finger motif lies at Met1–Glu33. Disordered stretches follow at residues Pro328–Ile366, Asn411–Lys431, Ile436–Ser455, and Gly468–Phe503. Over residues Pro333–Arg346 the composition is skewed to low complexity. Over residues Phe355–Ile366 the composition is skewed to basic and acidic residues.

In terms of processing, ubiquinated. Subsequent degradation by the proteasome pathway. As to expression, widely expressed.

It is found in the plastid. The protein localises to the chloroplast outer membrane. The protein resides in the nucleus. Its function is as follows. Plant-specific TFIIB-related protein that may be involved in an intracellular signaling pathway between plastids and the nucleus. May act as general transcription factor (GTF) of RNA polymerase I-dependent transcription and rRNA synthesis. Forms a ternary complex with TBP2 and the rDNA promoter region. This is Plant-specific TFIIB-related protein 1 from Arabidopsis thaliana (Mouse-ear cress).